The sequence spans 191 residues: Pyridoxal 5'-phosphate synthase subunit PdxT (191 aa).

52–54 contributes to the L-glutamine binding site; it reads GES. Cysteine 81 (nucleophile) is an active-site residue. L-glutamine contacts are provided by residues arginine 108 and 136-137; that span reads IR. Active-site charge relay system residues include histidine 172 and glutamate 174.

The protein belongs to the glutaminase PdxT/SNO family. In the presence of PdxS, forms a dodecamer of heterodimers. Only shows activity in the heterodimer.

It catalyses the reaction aldehydo-D-ribose 5-phosphate + D-glyceraldehyde 3-phosphate + L-glutamine = pyridoxal 5'-phosphate + L-glutamate + phosphate + 3 H2O + H(+). The catalysed reaction is L-glutamine + H2O = L-glutamate + NH4(+). It functions in the pathway cofactor biosynthesis; pyridoxal 5'-phosphate biosynthesis. Catalyzes the hydrolysis of glutamine to glutamate and ammonia as part of the biosynthesis of pyridoxal 5'-phosphate. The resulting ammonia molecule is channeled to the active site of PdxS. The protein is Pyridoxal 5'-phosphate synthase subunit PdxT of Actinobacillus pleuropneumoniae serotype 5b (strain L20).